A 376-amino-acid chain; its full sequence is 5-amino-6-(D-ribitylamino)uracil--L-tyrosine 4-hydroxyphenyl transferase 1 (376 aa).

One can recognise a Radical SAM core domain in the interval 50–275; it reads VTYVVNRNIN…PGLEDLKVYA (226 aa). [4Fe-4S] cluster contacts are provided by cysteine 64, cysteine 68, and cysteine 71.

It belongs to the radical SAM superfamily. CofH family. Consists of two subunits, CofG and CofH. It depends on [4Fe-4S] cluster as a cofactor.

It catalyses the reaction 5-amino-6-(D-ribitylamino)uracil + L-tyrosine + S-adenosyl-L-methionine = 5-amino-5-(4-hydroxybenzyl)-6-(D-ribitylimino)-5,6-dihydrouracil + 2-iminoacetate + 5'-deoxyadenosine + L-methionine + H(+). It participates in cofactor biosynthesis; coenzyme F0 biosynthesis. Its function is as follows. Catalyzes the radical-mediated synthesis of 5-amino-5-(4-hydroxybenzyl)-6-(D-ribitylimino)-5,6-dihydrouracil from 5-amino-6-(D-ribitylamino)uracil and L-tyrosine. This is 5-amino-6-(D-ribitylamino)uracil--L-tyrosine 4-hydroxyphenyl transferase 1 from Methanosarcina mazei (strain ATCC BAA-159 / DSM 3647 / Goe1 / Go1 / JCM 11833 / OCM 88) (Methanosarcina frisia).